The sequence spans 451 residues: Tubulin alpha-1A chain (451 aa).

Positions M1–C4 match the MREC motif motif. GTP-binding residues include Q11, E71, S140, G144, T145, T179, N206, and N228. E71 is a binding site for Mg(2+). E254 is a catalytic residue. Residues Y432–Y451 are disordered. E445 bears the 5-glutamyl polyglutamate mark.

Belongs to the tubulin family. As to quaternary structure, dimer of alpha and beta chains. A typical microtubule is a hollow water-filled tube with an outer diameter of 25 nm and an inner diameter of 15 nM. Alpha-beta heterodimers associate head-to-tail to form protofilaments running lengthwise along the microtubule wall with the beta-tubulin subunit facing the microtubule plus end conferring a structural polarity. Microtubules usually have 13 protofilaments but different protofilament numbers can be found in some organisms and specialized cells. Requires Mg(2+) as cofactor. Post-translationally, some glutamate residues at the C-terminus are polyglycylated, resulting in polyglycine chains on the gamma-carboxyl group. Glycylation is mainly limited to tubulin incorporated into axonemes (cilia and flagella) whereas glutamylation is prevalent in neuronal cells, centrioles, axonemes, and the mitotic spindle. Both modifications can coexist on the same protein on adjacent residues, and lowering polyglycylation levels increases polyglutamylation, and reciprocally. The precise function of polyglycylation is still unclear. In terms of processing, some glutamate residues at the C-terminus are polyglutamylated, resulting in polyglutamate chains on the gamma-carboxyl group. Polyglutamylation plays a key role in microtubule severing by spastin (SPAST). SPAST preferentially recognizes and acts on microtubules decorated with short polyglutamate tails: severing activity by SPAST increases as the number of glutamates per tubulin rises from one to eight, but decreases beyond this glutamylation threshold. Undergoes a tyrosination/detyrosination cycle, the cyclic removal and re-addition of a C-terminal tyrosine residue by the enzymes tubulin tyrosine carboxypeptidase (MATCAP1, VASH1 or VASH2) and tubulin tyrosine ligase (TTL), respectively. Post-translationally, tyrosination promotes microtubule interaction with CAP-Gly microtubule plus-end tracking proteins. Tyrosinated tubulins regulate the initiation of dynein-driven motility. In terms of processing, detyrosination is involved in metaphase plate congression by guiding chromosomes during mitosis. Detyrosination increases microtubules-dependent mechanotransduction in dystrophic cardiac and skeletal muscle. In cardiomyocytes, detyrosinated microtubules are required to resist to contractile compression during contraction.

It is found in the cytoplasm. The protein resides in the cytoskeleton. It carries out the reaction GTP + H2O = GDP + phosphate + H(+). In terms of biological role, tubulin is the major constituent of microtubules, a cylinder consisting of laterally associated linear protofilaments composed of alpha- and beta-tubulin heterodimers. Microtubules grow by the addition of GTP-tubulin dimers to the microtubule end, where a stabilizing cap forms. Below the cap, tubulin dimers are in GDP-bound state, owing to GTPase activity of alpha-tubulin. This Gallus gallus (Chicken) protein is Tubulin alpha-1A chain (TUBA1A).